The primary structure comprises 288 residues: Shikimate dehydrogenase (NADP(+)) (288 aa).

Residues 14 to 16 (SIS) and Thr63 each bind shikimate. Residue Lys67 is the Proton acceptor of the active site. Glu79 provides a ligand contact to NADP(+). Positions 88 and 103 each coordinate shikimate. NADP(+) is bound by residues 127 to 131 (GSGGA), 151 to 156 (NRTYEK), and Met219. Tyr221 is a binding site for shikimate. Residue Gly242 participates in NADP(+) binding.

This sequence belongs to the shikimate dehydrogenase family. As to quaternary structure, homodimer.

The catalysed reaction is shikimate + NADP(+) = 3-dehydroshikimate + NADPH + H(+). It participates in metabolic intermediate biosynthesis; chorismate biosynthesis; chorismate from D-erythrose 4-phosphate and phosphoenolpyruvate: step 4/7. Involved in the biosynthesis of the chorismate, which leads to the biosynthesis of aromatic amino acids. Catalyzes the reversible NADPH linked reduction of 3-dehydroshikimate (DHSA) to yield shikimate (SA). The sequence is that of Shikimate dehydrogenase (NADP(+)) from Caldicellulosiruptor bescii (strain ATCC BAA-1888 / DSM 6725 / KCTC 15123 / Z-1320) (Anaerocellum thermophilum).